Reading from the N-terminus, the 608-residue chain is Glutamyl-tRNA(Gln) amidotransferase subunit E (608 aa).

Belongs to the GatB/GatE family. GatE subfamily. Heterodimer of GatD and GatE.

The catalysed reaction is L-glutamyl-tRNA(Gln) + L-glutamine + ATP + H2O = L-glutaminyl-tRNA(Gln) + L-glutamate + ADP + phosphate + H(+). Its function is as follows. Allows the formation of correctly charged Gln-tRNA(Gln) through the transamidation of misacylated Glu-tRNA(Gln) in organisms which lack glutaminyl-tRNA synthetase. The reaction takes place in the presence of glutamine and ATP through an activated gamma-phospho-Glu-tRNA(Gln). The GatDE system is specific for glutamate and does not act on aspartate. In Pyrobaculum aerophilum (strain ATCC 51768 / DSM 7523 / JCM 9630 / CIP 104966 / NBRC 100827 / IM2), this protein is Glutamyl-tRNA(Gln) amidotransferase subunit E.